The sequence spans 165 residues: MANAKNQQTLSSLQGSLQGIETFYVVNYQGLTAGQLSELRKSIREKGGQLIVAKNTLINLALQDGGRDFGDALKGPSALVLAHEDPAGVAKALSDAAKKNDKGIPAIKGGFVEGNKVDVKVVERLASLGSKQSLQAEMVGVLSAHLSNFVGILEAYREKLEGENA.

Belongs to the universal ribosomal protein uL10 family. Part of the ribosomal stalk of the 50S ribosomal subunit. The N-terminus interacts with L11 and the large rRNA to form the base of the stalk. The C-terminus forms an elongated spine to which L12 dimers bind in a sequential fashion forming a multimeric L10(L12)X complex.

Functionally, forms part of the ribosomal stalk, playing a central role in the interaction of the ribosome with GTP-bound translation factors. The chain is Large ribosomal subunit protein uL10 from Deinococcus deserti (strain DSM 17065 / CIP 109153 / LMG 22923 / VCD115).